A 550-amino-acid polypeptide reads, in one-letter code: Arginine--tRNA ligase (550 aa).

Residues 130 to 140 (ANPTGPIHIGG) carry the 'HIGH' region motif.

Belongs to the class-I aminoacyl-tRNA synthetase family. As to quaternary structure, monomer.

It is found in the cytoplasm. It carries out the reaction tRNA(Arg) + L-arginine + ATP = L-arginyl-tRNA(Arg) + AMP + diphosphate. This is Arginine--tRNA ligase from Mycobacterium sp. (strain KMS).